The sequence spans 950 residues: Protocadherin alpha-3 (950 aa).

The first 29 residues, 1–29, serve as a signal peptide directing secretion; it reads MLFSWREDPGAQCLLLSLLLLAASEVGSG. Cadherin domains are found at residues 30-133, 134-242, 243-350, 351-455, 456-565, and 581-678; these read QLHY…APVF, PMSV…APAF, ERTI…VPEL, VIHS…APAF, SQSE…APAL, and VPRS…APKA. The Extracellular segment spans residues 30-697; sequence QLHYSVSEEA…GPEAALVDVN (668 aa). 2 N-linked (GlcNAc...) asparagine glycosylation sites follow: Asn-257 and Asn-265. A glycan (N-linked (GlcNAc...) asparagine) is linked at Asn-548. The helical transmembrane segment at 698–718 threads the bilayer; the sequence is VYLIVAICAVSSLLVLTLLLY. The Cytoplasmic portion of the chain corresponds to 719-950; it reads TALRCSAPPT…GNSTTDNSDQ (232 aa). PXXP repeat units lie at residues 734–737 and 774–777; these read PGKP and PSLP. Positions 734–894 are 6 X 4 AA repeats of P-X-X-P; sequence PGKPTLVCSS…PDKFIIPGSP (161 aa). Disordered stretches follow at residues 777 to 806, 831 to 856, and 869 to 889; these read PPCPISRDREEKQDVDVDLSAKPRQPNPDW, GPGGPDQQWPTVSSATPEPEAGEVSP, and FKYGPGNPKQSGPGELPDKFI. Residues 782 to 797 are compositionally biased toward basic and acidic residues; that stretch reads SRDREEKQDVDVDLSA. PXXP repeat units lie at residues 799 to 802, 832 to 835, 873 to 876, and 891 to 894; these read PRQP, PGGP, PGNP, and PGSP. Positions 901–950 are disordered; sequence QEPANSQIDKSDFITFGKKEETKKKKKKKKGNKTQEKKEKGNSTTDNSDQ. Over residues 909–923 the composition is skewed to basic and acidic residues; sequence DKSDFITFGKKEETK.

The protein resides in the cell membrane. Its function is as follows. Potential calcium-dependent cell-adhesion protein. May be involved in the establishment and maintenance of specific neuronal connections in the brain. The chain is Protocadherin alpha-3 (PCDHA3) from Pan troglodytes (Chimpanzee).